Reading from the N-terminus, the 266-residue chain is Glucosamine-6-phosphate deaminase (266 aa).

The active-site Proton acceptor; for enolization step is the Asp-72. Catalysis depends on Asp-141, which acts as the For ring-opening step. His-143 (proton acceptor; for ring-opening step) is an active-site residue. The active-site For ring-opening step is the Glu-148.

Belongs to the glucosamine/galactosamine-6-phosphate isomerase family. NagB subfamily. Homohexamer.

The enzyme catalyses alpha-D-glucosamine 6-phosphate + H2O = beta-D-fructose 6-phosphate + NH4(+). It participates in amino-sugar metabolism; N-acetylneuraminate degradation; D-fructose 6-phosphate from N-acetylneuraminate: step 5/5. Its activity is regulated as follows. Allosterically activated by N-acetylglucosamine 6-phosphate (GlcNAc6P). Its function is as follows. Catalyzes the reversible isomerization-deamination of glucosamine 6-phosphate (GlcN6P) to form fructose 6-phosphate (Fru6P) and ammonium ion. The polypeptide is Glucosamine-6-phosphate deaminase (Enterobacter sp. (strain 638)).